Consider the following 313-residue polypeptide: 4-hydroxy-3-methylbut-2-enyl diphosphate reductase (313 aa).

Cysteine 13 contacts [4Fe-4S] cluster. Residues histidine 41 and histidine 75 each contribute to the (2E)-4-hydroxy-3-methylbut-2-enyl diphosphate site. The dimethylallyl diphosphate site is built by histidine 41 and histidine 75. Isopentenyl diphosphate is bound by residues histidine 41 and histidine 75. Cysteine 97 contacts [4Fe-4S] cluster. Histidine 125 serves as a coordination point for (2E)-4-hydroxy-3-methylbut-2-enyl diphosphate. Residue histidine 125 coordinates dimethylallyl diphosphate. Residue histidine 125 coordinates isopentenyl diphosphate. The active-site Proton donor is the glutamate 127. Position 168 (threonine 168) interacts with (2E)-4-hydroxy-3-methylbut-2-enyl diphosphate. [4Fe-4S] cluster is bound at residue cysteine 218. (2E)-4-hydroxy-3-methylbut-2-enyl diphosphate contacts are provided by serine 246, serine 247, asparagine 248, and serine 295. Positions 246, 247, 248, and 295 each coordinate dimethylallyl diphosphate. The isopentenyl diphosphate site is built by serine 246, serine 247, asparagine 248, and serine 295.

The protein belongs to the IspH family. [4Fe-4S] cluster serves as cofactor.

It catalyses the reaction isopentenyl diphosphate + 2 oxidized [2Fe-2S]-[ferredoxin] + H2O = (2E)-4-hydroxy-3-methylbut-2-enyl diphosphate + 2 reduced [2Fe-2S]-[ferredoxin] + 2 H(+). The catalysed reaction is dimethylallyl diphosphate + 2 oxidized [2Fe-2S]-[ferredoxin] + H2O = (2E)-4-hydroxy-3-methylbut-2-enyl diphosphate + 2 reduced [2Fe-2S]-[ferredoxin] + 2 H(+). It functions in the pathway isoprenoid biosynthesis; dimethylallyl diphosphate biosynthesis; dimethylallyl diphosphate from (2E)-4-hydroxy-3-methylbutenyl diphosphate: step 1/1. The protein operates within isoprenoid biosynthesis; isopentenyl diphosphate biosynthesis via DXP pathway; isopentenyl diphosphate from 1-deoxy-D-xylulose 5-phosphate: step 6/6. Functionally, catalyzes the conversion of 1-hydroxy-2-methyl-2-(E)-butenyl 4-diphosphate (HMBPP) into a mixture of isopentenyl diphosphate (IPP) and dimethylallyl diphosphate (DMAPP). Acts in the terminal step of the DOXP/MEP pathway for isoprenoid precursor biosynthesis. The sequence is that of 4-hydroxy-3-methylbut-2-enyl diphosphate reductase from Chlorobium phaeovibrioides (strain DSM 265 / 1930) (Prosthecochloris vibrioformis (strain DSM 265)).